A 328-amino-acid chain; its full sequence is MSEKIRVLLYYKYVSIENAQEYAAKHLEFCKSIGLKGRILIADEGINGTVSGDYETTQKYMDWVHSDERFADLWFKIDEENQQAFRKMFVRYKKEIVHLGLEDNNFDSDINPLETTGEYLNPKQFKEALLDEDTVVLDTRNDYEYDLGHFRGAIRPDIRNFRELPQWVRDNKDKFMEKRVVVYCTGGVRCEKFSGWLVREGFKDVGQLHGGIATYGKDPEVQGELWDGAMYVFDDRISVPINHVNPTVISKDYFDGTPCERYVNCANPFCNKQIFASEENETKYVRGCSPECRAHERNRYVQENGLSRQEWAERLEAIGESLPEFVGA.

The 95-residue stretch at 130-224 (LDEDTVVLDT…YGKDPEVQGE (95 aa)) folds into the Rhodanese domain. Cys184 acts as the Cysteine persulfide intermediate in catalysis.

The protein belongs to the TrhO family.

The enzyme catalyses uridine(34) in tRNA + AH2 + O2 = 5-hydroxyuridine(34) in tRNA + A + H2O. Its function is as follows. Catalyzes oxygen-dependent 5-hydroxyuridine (ho5U) modification at position 34 in tRNAs. The sequence is that of tRNA uridine(34) hydroxylase from Streptococcus pyogenes serotype M12 (strain MGAS2096).